Reading from the N-terminus, the 135-residue chain is MDDYEKLLERAIDQLPPEVFETKRFEVPKAYSVIQGNRTFIQNFREVADALNRDPQHLLKFLLRELGTAGNLEGGRAILQGKFTHFLINERIEDYVNKFVICHECNRPDTRIIREGRISLLKCEACGAKAPLKNV.

This sequence belongs to the eIF-2-beta/eIF-5 family. As to quaternary structure, heterotrimer composed of an alpha, a beta and a gamma chain.

Functionally, eIF-2 functions in the early steps of protein synthesis by forming a ternary complex with GTP and initiator tRNA. This Methanothermobacter thermautotrophicus (strain ATCC 29096 / DSM 1053 / JCM 10044 / NBRC 100330 / Delta H) (Methanobacterium thermoautotrophicum) protein is Translation initiation factor 2 subunit beta (eif2b).